A 90-amino-acid polypeptide reads, in one-letter code: Progonadoliberin-3 (90 aa).

The signal sequence occupies residues 1–23 (MEASSRVTVQVLLLALVVQVTLS). At Q24 the chain carries Pyrrolidone carboxylic acid. Residue G33 is modified to Glycine amide.

It belongs to the GnRH family.

The protein resides in the secreted. Its function is as follows. Stimulates the secretion of gonadotropins. This chain is Progonadoliberin-3 (gnrh3), found in Pagrus major (Red sea bream).